A 187-amino-acid chain; its full sequence is Signal peptidase complex catalytic subunit SEC11 (187 aa).

The Cytoplasmic portion of the chain corresponds to 1–18; it reads MLSSLSPYMANPRNTLSQ. The helical; Signal-anchor for type II membrane protein transmembrane segment at 19–39 threads the bilayer; sequence VLNFGLVLSSAFMVWKALSVI. Topologically, residues 40–187 are lumenal; it reads TNSASPVVVV…MGLMVMLQRE (148 aa). Residues Ser-53 and His-92 each act as charge relay system in the active site. Asn-125 carries N-linked (GlcNAc...) asparagine glycosylation. Asp-129 acts as the Charge relay system in catalysis. The C-terminal short (CTS) helix stretch occupies residues 173 to 184; it reads VLLGFMGLMVML.

Belongs to the peptidase S26B family. In terms of assembly, component of the signal peptidase complex (SPC) composed of a catalytic subunit SEC11 and three accessory subunits SPC1, SPC2 and SPC3. The complex induces a local thinning of the ER membrane which is used to measure the length of the signal peptide (SP) h-region of protein substrates. This ensures the selectivity of the complex towards h-regions shorter than 18-20 amino acids. SPC associates with the translocon complex.

It is found in the endoplasmic reticulum membrane. The catalysed reaction is Cleavage of hydrophobic, N-terminal signal or leader sequences from secreted and periplasmic proteins.. Catalytic component of the signal peptidase complex (SPC) which catalyzes the cleavage of N-terminal signal sequences from nascent proteins as they are translocated into the lumen of the endoplasmic reticulum. Specifically cleaves N-terminal signal peptides that contain a hydrophobic alpha-helix (h-region) shorter than 18-20 amino acids. This Ajellomyces capsulatus (strain NAm1 / WU24) (Darling's disease fungus) protein is Signal peptidase complex catalytic subunit SEC11 (SEC11).